Consider the following 112-residue polypeptide: Colipase (112 aa).

Positions 1 to 17 (MEKILVLLLVALAVVYA) are cleaved as a signal peptide. Positions 18 to 22 (VPDPR) are cleaved as a propeptide — enterostatin, activation peptide. Cystine bridges form between cysteine 34-cysteine 45, cysteine 40-cysteine 56, cysteine 44-cysteine 78, cysteine 66-cysteine 86, and cysteine 80-cysteine 104.

Belongs to the colipase family. In terms of assembly, forms a 1:1 stoichiometric complex with pancreatic lipase. Expressed by the pancreas.

It is found in the secreted. Colipase is a cofactor of pancreatic lipase. It allows the lipase to anchor itself to the lipid-water interface. Without colipase the enzyme is washed off by bile salts, which have an inhibitory effect on the lipase. Its function is as follows. Enterostatin has a biological activity as a satiety signal. The polypeptide is Colipase (CLPS) (Canis lupus familiaris (Dog)).